The following is a 249-amino-acid chain: 2,3-bisphosphoglycerate-dependent phosphoglycerate mutase (249 aa).

Substrate contacts are provided by residues 11–18 (RHGNSEWN), 24–25 (TG), arginine 63, 90–93 (ERHY), lysine 101, 117–118 (RR), and 185–186 (GN). Histidine 12 (tele-phosphohistidine intermediate) is an active-site residue. Residue glutamate 90 is the Proton donor/acceptor of the active site.

Belongs to the phosphoglycerate mutase family. BPG-dependent PGAM subfamily.

The enzyme catalyses (2R)-2-phosphoglycerate = (2R)-3-phosphoglycerate. It participates in carbohydrate degradation; glycolysis; pyruvate from D-glyceraldehyde 3-phosphate: step 3/5. In terms of biological role, catalyzes the interconversion of 2-phosphoglycerate and 3-phosphoglycerate. In Leifsonia xyli subsp. xyli (strain CTCB07), this protein is 2,3-bisphosphoglycerate-dependent phosphoglycerate mutase.